The primary structure comprises 930 residues: Isoleucine--tRNA ligase (930 aa).

Positions 57–67 match the 'HIGH' region motif; the sequence is PYANGNIHVGH. L-isoleucyl-5'-AMP is bound at residue glutamate 554. Positions 595–599 match the 'KMSKS' region motif; the sequence is KMSKS. ATP is bound at residue lysine 598. Zn(2+) contacts are provided by cysteine 888, cysteine 891, cysteine 908, and cysteine 911.

The protein belongs to the class-I aminoacyl-tRNA synthetase family. IleS type 1 subfamily. As to quaternary structure, monomer. It depends on Zn(2+) as a cofactor.

The protein resides in the cytoplasm. It carries out the reaction tRNA(Ile) + L-isoleucine + ATP = L-isoleucyl-tRNA(Ile) + AMP + diphosphate. Catalyzes the attachment of isoleucine to tRNA(Ile). As IleRS can inadvertently accommodate and process structurally similar amino acids such as valine, to avoid such errors it has two additional distinct tRNA(Ile)-dependent editing activities. One activity is designated as 'pretransfer' editing and involves the hydrolysis of activated Val-AMP. The other activity is designated 'posttransfer' editing and involves deacylation of mischarged Val-tRNA(Ile). This Streptococcus pneumoniae (strain JJA) protein is Isoleucine--tRNA ligase.